We begin with the raw amino-acid sequence, 622 residues long: Leucine-rich repeat-containing protein 70 (622 aa).

Residues 1–31 (MCGLQFSLPCLRLFLVVTCYLLLLLHKEILG) form the signal peptide. An LRRNT domain is found at 32-60 (CSSVCQLCTGRQINCRNLGLSSIPKNFPE). LRR repeat units follow at residues 61–82 (STVF…ELTG), 85–106 (SLVA…AFVQ), 109–130 (HLYF…IFKG), 133–154 (NLRN…VFND), 157–178 (SVQY…TFVG), 181–202 (ALRI…GFQH), 205–226 (NLAC…AFEV), 229–250 (SLRR…AFKG), 253–274 (NLEY…GFSG), 277–298 (NLKH…TFSL), 301–322 (NLIY…TFEN), and 326–347 (SLKI…VLKP). N-linked (GlcNAc...) asparagine glycosylation occurs at asparagine 215. N-linked (GlcNAc...) asparagine glycosylation occurs at asparagine 266. Asparagine 331 and asparagine 400 each carry an N-linked (GlcNAc...) asparagine glycan. Residues 359 to 406 (NPWECNCKLLGLRDWLASSAITLNIYCQNPPSMRGRALRYINITNCVT) form the LRRCT domain. The helical transmembrane segment at 527 to 547 (AFDILLAFFILACVLIIFLIY) threads the bilayer.

As to expression, expressed at low levels in many tissues, including smooth muscle, brain, uterus, pancreas, cartilage, adipose, spleen and testis.

It localises to the membrane. Renders cells highly sensitive to the activation by cytokines and lipopolysaccharide (LPS). The chain is Leucine-rich repeat-containing protein 70 (LRRC70) from Homo sapiens (Human).